Here is a 393-residue protein sequence, read N- to C-terminus: MTDVALPTAAPAAFDLPPDSVGVVAPQRMHFAEPLKLRNGSSIAGYDLMVETYGTLNADRSNAVLVCHALNASHHVAGVYADDRRNVGWWDNMVGPGKPLDTNRFFVIGINNLGSCFGSTGPMSLNPATGAPYGAAFPVVTVEDWVNAQARVADAFGITQFAAVMGGSLGGMQAVAWSLMYPDRLRHCIVIASTPKLSAQNIAFNEVARSAILSDPDFHGGNYYAHGVKPKRGLRVARMIGHITYLSDEDMAEKFGRELKSEDIRFSFDVEFQVESYLRYQGDKFAEYFDANTYLLITRALDYFDPALAHGGDLTRAMAQTQASFLVASFGTDWRFAPSRSRELVKALLDNKRPVSYAEIDAPHGHDAFLLDDPRYHNLMRAYYDRIAEEIGA.

The AB hydrolase-1 domain maps to 62–372; it reads NAVLVCHALN…PHGHDAFLLD (311 aa). Serine 168 functions as the Nucleophile in the catalytic mechanism. Substrate is bound at residue arginine 238. Catalysis depends on residues aspartate 333 and histidine 366. Residue aspartate 367 participates in substrate binding.

This sequence belongs to the AB hydrolase superfamily. MetX family. Homodimer.

The protein localises to the cytoplasm. The catalysed reaction is L-homoserine + succinyl-CoA = O-succinyl-L-homoserine + CoA. It functions in the pathway amino-acid biosynthesis; L-methionine biosynthesis via de novo pathway; O-succinyl-L-homoserine from L-homoserine: step 1/1. Functionally, transfers a succinyl group from succinyl-CoA to L-homoserine, forming succinyl-L-homoserine. The chain is Homoserine O-succinyltransferase from Cupriavidus taiwanensis (strain DSM 17343 / BCRC 17206 / CCUG 44338 / CIP 107171 / LMG 19424 / R1) (Ralstonia taiwanensis (strain LMG 19424)).